The primary structure comprises 703 residues: Probable boron transporter 2 (703 aa).

Residues 1–35 (MEETFVPFEGIKNDLKGRLMCYKQDWTGGIKAGFR) lie on the Cytoplasmic side of the membrane. Residues 36-56 (ILAPTTYIFFASAIPVISFGE) form a helical membrane-spanning segment. The Extracellular segment spans residues 57–75 (QLERSTDGVLTAVQTLAST). The chain crosses the membrane as a helical span at residues 76–96 (AICGIIHSIIGGQPLLILGVA). The Cytoplasmic portion of the chain corresponds to 97–120 (EPTVIMYTFMFNFAKGRPELGRNL). The chain crosses the membrane as a helical span at residues 121 to 141 (FLAWSGWVCVWTSLILFVLAI). Over 142–155 (CGACSFINRFTRVA) the chain is Extracellular. The helical transmembrane segment at 156 to 176 (GELFGLLIAMLFMQQAIKGLV) threads the bilayer. Topologically, residues 177-195 (DEFRAPAREDLKLVEFLPS) are cytoplasmic. Residues 196–216 (WRFANGMFALVLSFGLLITAL) form a helical membrane-spanning segment. At 217 to 233 (RSRKARSWRYGTGWLRS) the chain is on the extracellular side. Residues 234-254 (LVADYGVPLMVLVWTGVSYIP) traverse the membrane as a helical segment. Over 255–289 (TGDVPKGIPRRLFSPNPWSPGAYENWTVVKEMLQV) the chain is Cytoplasmic. Residues 290 to 310 (PIVYIIGAFIPATMIAVLYYF) form a helical membrane-spanning segment. At 311 to 337 (DHSVASQLAQQKEFNLRKPSSYHYDLL) the chain is on the extracellular side. Residues 338-358 (LLGFLTLMCGLLGIPPSNGVI) form a helical membrane-spanning segment. At 359–480 (PQSPMHTKSL…AVMVGGCVAA (122 aa)) the chain is on the cytoplasmic side. A helical transmembrane segment spans residues 481–501 (MPLLKMIPTSVLWGYFAFMAI). The Extracellular portion of the chain corresponds to 502 to 557 (ESLPGNQFWERILLLFTAPSRRFKVLEDNHATFVETVPFKTIAMFTIFQTTYLLTC). The chain crosses the membrane as a helical span at residues 558–578 (FGLTWIPIAGVMFPLLIMFLI). Residues 579–703 (PVRQYILPRF…SPLNPSSSSK (125 aa)) are Cytoplasmic-facing. The disordered stretch occupies residues 678–703 (EMSPRLSGKGQNSPKPSPLNPSSSSK).

Belongs to the anion exchanger (TC 2.A.31.3) family.

It localises to the membrane. Probable boron transporter. Boron is essential for maintaining the integrity of plants cell walls. This Arabidopsis thaliana (Mouse-ear cress) protein is Probable boron transporter 2 (BOR2).